Here is a 340-residue protein sequence, read N- to C-terminus: Inactive hyaluronidase B (340 aa).

2 disulfides stabilise this stretch: Cys21-Cys310 and Cys187-Cys199. Asn66 and Asn81 each carry an N-linked (GlcNAc...) asparagine glycan.

This sequence belongs to the glycosyl hydrolase 56 family. In terms of processing, N-glycosylated on at least two Asn residues by identical heptasaccharide units composed of Man, GlcNAc, and Fuc residues in the molar ration of 3:2:2. Expressed by the venom gland.

Its subcellular location is the secreted. Has no hyaluronidase activity. The chain is Inactive hyaluronidase B from Vespula vulgaris (Yellow jacket).